Here is a 138-residue protein sequence, read N- to C-terminus: Acidic phospholipase A2 Ts-A3 (138 aa).

Residues 1 to 16 (MRTLWIMAVLLLGVEG) form the signal peptide. 7 disulfides stabilise this stretch: C42–C132, C44–C60, C59–C111, C65–C138, C66–C104, C73–C97, and C91–C102. Residues Y43, G45, and G47 each coordinate Ca(2+). H63 is an active-site residue. D64 serves as a coordination point for Ca(2+). The active site involves D105.

Requires Ca(2+) as cofactor. In terms of tissue distribution, expressed by the venom gland.

The protein localises to the secreted. It catalyses the reaction a 1,2-diacyl-sn-glycero-3-phosphocholine + H2O = a 1-acyl-sn-glycero-3-phosphocholine + a fatty acid + H(+). In terms of biological role, snake venom phospholipase A2 (PLA2) that shows a moderate inhibition of ADP-induced human platelet aggregation when tested on platelet rich plasma. Exhibits high hydrolytic activities and prefers the anionic micelles (dPPC with deoxycholate) to the zwitterionic micelles (dPPC with Triton X-100). PLA2 catalyzes the calcium-dependent hydrolysis of the 2-acyl groups in 3-sn-phosphoglycerides. This chain is Acidic phospholipase A2 Ts-A3, found in Trimeresurus stejnegeri (Chinese green tree viper).